The chain runs to 83 residues: NAD(P)H-quinone oxidoreductase subunit L (83 aa).

2 consecutive transmembrane segments (helical) span residues 18–38 (IGGY…LLFF) and 53–73 (FSVY…APFL).

Belongs to the complex I NdhL subunit family. As to quaternary structure, NDH-1 can be composed of about 15 different subunits; different subcomplexes with different compositions have been identified which probably have different functions.

It is found in the cellular thylakoid membrane. The catalysed reaction is a plastoquinone + NADH + (n+1) H(+)(in) = a plastoquinol + NAD(+) + n H(+)(out). The enzyme catalyses a plastoquinone + NADPH + (n+1) H(+)(in) = a plastoquinol + NADP(+) + n H(+)(out). NDH-1 shuttles electrons from an unknown electron donor, via FMN and iron-sulfur (Fe-S) centers, to quinones in the respiratory and/or the photosynthetic chain. The immediate electron acceptor for the enzyme in this species is believed to be plastoquinone. Couples the redox reaction to proton translocation, and thus conserves the redox energy in a proton gradient. Cyanobacterial NDH-1 also plays a role in inorganic carbon-concentration. This is NAD(P)H-quinone oxidoreductase subunit L from Synechococcus sp. (strain CC9311).